Consider the following 191-residue polypeptide: Peptidyl-tRNA hydrolase (191 aa).

Position 14 (Tyr-14) interacts with tRNA. Residue His-19 is the Proton acceptor of the active site. TRNA is bound by residues Phe-64, Asn-66, and Asn-113.

This sequence belongs to the PTH family. Monomer.

It is found in the cytoplasm. The enzyme catalyses an N-acyl-L-alpha-aminoacyl-tRNA + H2O = an N-acyl-L-amino acid + a tRNA + H(+). Its function is as follows. Hydrolyzes ribosome-free peptidyl-tRNAs (with 1 or more amino acids incorporated), which drop off the ribosome during protein synthesis, or as a result of ribosome stalling. In terms of biological role, catalyzes the release of premature peptidyl moieties from peptidyl-tRNA molecules trapped in stalled 50S ribosomal subunits, and thus maintains levels of free tRNAs and 50S ribosomes. The protein is Peptidyl-tRNA hydrolase of Fusobacterium nucleatum subsp. nucleatum (strain ATCC 25586 / DSM 15643 / BCRC 10681 / CIP 101130 / JCM 8532 / KCTC 2640 / LMG 13131 / VPI 4355).